The primary structure comprises 89 residues: MAHKKAGGSSRNGRDSESKRLGVKKFGGEAVIPGNIIVRQRGTKWHAGANVGLGKDHTIFALTTGNVDFRKKANGRVYVSVMPKAEAAE.

The tract at residues 1–23 (MAHKKAGGSSRNGRDSESKRLGV) is disordered.

Belongs to the bacterial ribosomal protein bL27 family.

This Rhizobium meliloti (strain 1021) (Ensifer meliloti) protein is Large ribosomal subunit protein bL27.